A 460-amino-acid polypeptide reads, in one-letter code: Fumarate hydratase class II (460 aa).

Substrate contacts are provided by residues 95 to 97, 126 to 129, 136 to 138, and T184; these read SGT, HPND, and SSN. The Proton donor/acceptor role is filled by H185. The active site involves S315. Substrate is bound by residues S316 and 321 to 323; that span reads KIN.

This sequence belongs to the class-II fumarase/aspartase family. Fumarase subfamily. Homotetramer.

The protein localises to the cytoplasm. It catalyses the reaction (S)-malate = fumarate + H2O. It participates in carbohydrate metabolism; tricarboxylic acid cycle; (S)-malate from fumarate: step 1/1. In terms of biological role, involved in the TCA cycle. Catalyzes the stereospecific interconversion of fumarate to L-malate. The polypeptide is Fumarate hydratase class II (Chlamydia caviae (strain ATCC VR-813 / DSM 19441 / 03DC25 / GPIC) (Chlamydophila caviae)).